The sequence spans 233 residues: Ras-related protein Rab-20 (233 aa).

Residues glycine 17, lysine 18, threonine 19, aspartate 32, and threonine 36 each contribute to the GTP site. Residue threonine 19 participates in Mg(2+) binding. 2 consecutive short sequence motifs (switch) follow at residues 28 to 41 and 55 to 72; these read RRFPDTVSTVGGAF and DTAGREQFHGLGSLYCRG. Mg(2+) contacts are provided by threonine 36 and aspartate 55. Positions 58, 113, 114, and 116 each coordinate GTP. Over residues 119-130 the composition is skewed to basic and acidic residues; that stretch reads SERDTEGGEKEG. The disordered stretch occupies residues 119–138; the sequence is SERDTEGGEKEGPASGKVGS. GTP contacts are provided by alanine 183 and lysine 184. Residues cysteine 231 and cysteine 232 are each lipidated (S-geranylgeranyl cysteine).

It belongs to the small GTPase superfamily. Rab family. The cofactor is Mg(2+). As to expression, present in a variety of tissues, but not in brain.

It localises to the cytoplasmic vesicle. The protein resides in the phagosome. It is found in the phagosome membrane. Its subcellular location is the golgi apparatus. The enzyme catalyses GTP + H2O = GDP + phosphate + H(+). Regulated by guanine nucleotide exchange factors (GEFs) which promote the exchange of bound GDP for free GTP. Regulated by GTPase activating proteins (GAPs) which increase the GTP hydrolysis activity. Inhibited by GDP dissociation inhibitors (GDIs). Functionally, plays a role in apical endocytosis/recycling. Plays a role in the maturation and acidification of phagosomes that engulf pathogens, such as S.aureus and Mycobacterium. Plays a role in the fusion of phagosomes with lysosomes. This is Ras-related protein Rab-20 from Mus musculus (Mouse).